Here is a 263-residue protein sequence, read N- to C-terminus: Transcription factor bHLH27 (263 aa).

Residues 32-47 (EAFSGSGESSSPDGAA) show a composition bias toward low complexity. Positions 32–61 (EAFSGSGESSSPDGAATSPASSKNVVSERN) are disordered. The segment covering 49 to 58 (SPASSKNVVS) has biased composition (polar residues). Residues 50–99 (PASSKNVVSERNRRQKLNQRLFALRSVVPNISKLDKASVIKDSIDYMQEL) form the bHLH domain.

As to quaternary structure, homodimer. As to expression, expressed constitutively in roots, leaves, stems, and flowers.

The protein resides in the nucleus. In Arabidopsis thaliana (Mouse-ear cress), this protein is Transcription factor bHLH27 (BHLH27).